The following is a 184-amino-acid chain: Effector CFEM1 (184 aa).

The signal sequence occupies residues 1–17; sequence MKYSVAFVALAAVAAQA. The CFEM domain maps to 18–112; the sequence is QSLADVPKCA…PTTTAAATST (95 aa). Cystine bridges form between C26/C68, C30/C63, C41/C48, and C50/C85. Position 45 (D45) interacts with heme. Disordered stretches follow at residues 83–106 and 136–163; these read NLCKNPPKESEAKSTAEEEKPTTT and IIPTTAAEEPATSTPAAATPTKGPEQAN. Residues 88-103 show a composition bias toward basic and acidic residues; the sequence is PPKESEAKSTAEEEKP. A lipid anchor (GPI-anchor amidated asparagine) is attached at N163. Residues 164-184 constitute a propeptide, removed in mature form; sequence GAAGLKGLGALAMAAFAALAL.

This sequence belongs to the RBT5 family. In terms of assembly, interacts with Z.mays LRR5; the interaction is direct. Interacts (via CFEM domain) with Z.mays WAK17 isoform 2; the interaction is direct.

It localises to the secreted. Its subcellular location is the cell wall. It is found in the cell membrane. The protein resides in the cell septum. The protein localises to the cytoplasm. Suppresses host programmed cell death during infection by binding to Z.mays WAK17 isoform 2 and Z.mays LRR5, to prevent activation of Z.mays WAK17 isoform 1 and the downstream hypersensitive response. This chain is Effector CFEM1, found in Gibberella zeae (strain ATCC MYA-4620 / CBS 123657 / FGSC 9075 / NRRL 31084 / PH-1) (Wheat head blight fungus).